The chain runs to 102 residues: MICOS complex subunit MIC12 (102 aa).

A helical membrane pass occupies residues 4-26 (VLKLTSVTLAASSLAAAGYFYAF).

The protein belongs to the MICOS complex subunit Mic12 family. In terms of assembly, component of the mitochondrial contact site and cristae organizing system (MICOS) complex.

The protein resides in the mitochondrion inner membrane. Component of the MICOS complex, a large protein complex of the mitochondrial inner membrane that plays crucial roles in the maintenance of crista junctions, inner membrane architecture, and formation of contact sites to the outer membrane. The polypeptide is MICOS complex subunit MIC12 (AIM5) (Lachancea thermotolerans (strain ATCC 56472 / CBS 6340 / NRRL Y-8284) (Yeast)).